We begin with the raw amino-acid sequence, 224 residues long: UPF0758 protein LCA_0852 (224 aa).

The MPN domain occupies 100–222 (VVASSQMVGQ…YLSLREEGYL (123 aa)). Residues H171, H173, and D184 each contribute to the Zn(2+) site. Positions 171-184 (HNHPSGQLAPSTQD) match the JAMM motif motif.

The protein belongs to the UPF0758 family.

This is UPF0758 protein LCA_0852 from Latilactobacillus sakei subsp. sakei (strain 23K) (Lactobacillus sakei subsp. sakei).